A 242-amino-acid polypeptide reads, in one-letter code: Large ribosomal subunit protein uL1 (242 aa).

The protein belongs to the universal ribosomal protein uL1 family. Part of the 50S ribosomal subunit.

In terms of biological role, binds directly to 23S rRNA. The L1 stalk is quite mobile in the ribosome, and is involved in E site tRNA release. Functionally, protein L1 is also a translational repressor protein, it controls the translation of the L11 operon by binding to its mRNA. This chain is Large ribosomal subunit protein uL1, found in Persephonella marina (strain DSM 14350 / EX-H1).